We begin with the raw amino-acid sequence, 227 residues long: Cytochrome c oxidase subunit 2 (227 aa).

Over methionine 1 to serine 14 the chain is Mitochondrial intermembrane. A helical transmembrane segment spans residues proline 15 to methionine 45. Over leucine 46–glutamine 59 the chain is Mitochondrial matrix. Residues glutamate 60–methionine 87 traverse the membrane as a helical segment. Over aspartate 88 to isoleucine 227 the chain is Mitochondrial intermembrane. Positions 161, 196, 198, 200, 204, and 207 each coordinate Cu cation. Glutamate 198 contributes to the Mg(2+) binding site. Tyrosine 218 bears the Phosphotyrosine mark.

It belongs to the cytochrome c oxidase subunit 2 family. As to quaternary structure, component of the cytochrome c oxidase (complex IV, CIV), a multisubunit enzyme composed of 14 subunits. The complex is composed of a catalytic core of 3 subunits MT-CO1, MT-CO2 and MT-CO3, encoded in the mitochondrial DNA, and 11 supernumerary subunits COX4I, COX5A, COX5B, COX6A, COX6B, COX6C, COX7A, COX7B, COX7C, COX8 and NDUFA4, which are encoded in the nuclear genome. The complex exists as a monomer or a dimer and forms supercomplexes (SCs) in the inner mitochondrial membrane with NADH-ubiquinone oxidoreductase (complex I, CI) and ubiquinol-cytochrome c oxidoreductase (cytochrome b-c1 complex, complex III, CIII), resulting in different assemblies (supercomplex SCI(1)III(2)IV(1) and megacomplex MCI(2)III(2)IV(2)). Found in a complex with TMEM177, COA6, COX18, COX20, SCO1 and SCO2. Interacts with TMEM177 in a COX20-dependent manner. Interacts with COX20. Interacts with COX16. Cu cation is required as a cofactor.

It localises to the mitochondrion inner membrane. It carries out the reaction 4 Fe(II)-[cytochrome c] + O2 + 8 H(+)(in) = 4 Fe(III)-[cytochrome c] + 2 H2O + 4 H(+)(out). Its function is as follows. Component of the cytochrome c oxidase, the last enzyme in the mitochondrial electron transport chain which drives oxidative phosphorylation. The respiratory chain contains 3 multisubunit complexes succinate dehydrogenase (complex II, CII), ubiquinol-cytochrome c oxidoreductase (cytochrome b-c1 complex, complex III, CIII) and cytochrome c oxidase (complex IV, CIV), that cooperate to transfer electrons derived from NADH and succinate to molecular oxygen, creating an electrochemical gradient over the inner membrane that drives transmembrane transport and the ATP synthase. Cytochrome c oxidase is the component of the respiratory chain that catalyzes the reduction of oxygen to water. Electrons originating from reduced cytochrome c in the intermembrane space (IMS) are transferred via the dinuclear copper A center (CU(A)) of subunit 2 and heme A of subunit 1 to the active site in subunit 1, a binuclear center (BNC) formed by heme A3 and copper B (CU(B)). The BNC reduces molecular oxygen to 2 water molecules using 4 electrons from cytochrome c in the IMS and 4 protons from the mitochondrial matrix. The protein is Cytochrome c oxidase subunit 2 (MT-CO2) of Conilurus penicillatus (Brush-tailed rabbit-rat).